Reading from the N-terminus, the 460-residue chain is tRNA modification GTPase MnmE (460 aa).

(6S)-5-formyl-5,6,7,8-tetrahydrofolate-binding residues include R29, E86, and K126. The TrmE-type G domain maps to 222-383 (GMRVVIAGRP…LAEHLKECMG (162 aa)). N232 contributes to the K(+) binding site. Residues 232–237 (NAGKSS), 251–257 (TAIAGTT), 276–279 (DTAG), and 341–344 (NKAD) each bind GTP. Residue S236 participates in Mg(2+) binding. K(+) contacts are provided by T251, I253, and T256. Residue T257 coordinates Mg(2+). Residue K460 participates in (6S)-5-formyl-5,6,7,8-tetrahydrofolate binding.

It belongs to the TRAFAC class TrmE-Era-EngA-EngB-Septin-like GTPase superfamily. TrmE GTPase family. Homodimer. Heterotetramer of two MnmE and two MnmG subunits. It depends on K(+) as a cofactor.

Its subcellular location is the cytoplasm. Exhibits a very high intrinsic GTPase hydrolysis rate. Involved in the addition of a carboxymethylaminomethyl (cmnm) group at the wobble position (U34) of certain tRNAs, forming tRNA-cmnm(5)s(2)U34. The polypeptide is tRNA modification GTPase MnmE (Pseudoalteromonas atlantica (strain T6c / ATCC BAA-1087)).